Reading from the N-terminus, the 169-residue chain is Protein YABBY 7 (169 aa).

Residues 21–48 (CSFCATVLLVSVPCSSVLRVVAVQCGHC) form a C4-type zinc finger. The segment at 63–122 (SASIELTPQELDAGPPPGEYSDESSGDDREGRDAEDDAPAPAAAAVANKPPGRKQRTPSA) is disordered.

It belongs to the YABBY family. Expressed in leaf sheaths and flowers.

It localises to the nucleus. The protein is Protein YABBY 7 (YAB7) of Oryza sativa subsp. japonica (Rice).